The chain runs to 1078 residues: Protein U90 (1078 aa).

Residues 1–12 show a composition bias toward polar residues; that stretch reads MESAKDTTSTSM. 4 disordered regions span residues 1-28, 464-483, 703-732, and 781-818; these read MESA…SNEE, SPTD…PTRQ, HMNN…DHKT, and ESED…DCTS.

This is Protein U90 (U90) from Homo sapiens (Human).